A 901-amino-acid chain; its full sequence is Core protein VP3 (901 aa).

Belongs to the orbivirus VP3 family.

Its subcellular location is the virion. Functionally, the VP3 protein is one of the five proteins (with VP1, VP4, VP6 and VP7) which form the inner capsid of the virus. The polypeptide is Core protein VP3 (Segment-3) (Bluetongue virus 1 (isolate South Africa) (BTV 1)).